Reading from the N-terminus, the 104-residue chain is Interferon alpha-inducible protein 27-like protein 1 (104 aa).

3 helical membrane-spanning segments follow: residues 14–34 (VAAV…LSAM), 59–79 (GGGV…AAGL), and 81–101 (VTSK…LGSP).

The protein belongs to the IFI6/IFI27 family.

Its subcellular location is the membrane. Its function is as follows. Plays a role in the apoptotic process and has a pro-apoptotic activity. This Homo sapiens (Human) protein is Interferon alpha-inducible protein 27-like protein 1.